The chain runs to 290 residues: Small ribosomal subunit biogenesis GTPase RsgA (290 aa).

Residues 62–219 form the CP-type G domain; it reads DNYLIRPQVA…VVDTPGFSTL (158 aa). GTP contacts are provided by residues 111 to 114 and 162 to 170; these read NKID and GPSGVGKST. Residues C243, C248, H250, and C256 each contribute to the Zn(2+) site.

The protein belongs to the TRAFAC class YlqF/YawG GTPase family. RsgA subfamily. As to quaternary structure, monomer. Associates with 30S ribosomal subunit, binds 16S rRNA. Zn(2+) is required as a cofactor.

The protein localises to the cytoplasm. Its function is as follows. One of several proteins that assist in the late maturation steps of the functional core of the 30S ribosomal subunit. Helps release RbfA from mature subunits. May play a role in the assembly of ribosomal proteins into the subunit. Circularly permuted GTPase that catalyzes slow GTP hydrolysis, GTPase activity is stimulated by the 30S ribosomal subunit. This Clostridium novyi (strain NT) protein is Small ribosomal subunit biogenesis GTPase RsgA.